The primary structure comprises 301 residues: GTPase Era (301 aa).

The 168-residue stretch at 6–173 (KSGFVAIVGR…LEQTNANLEI (168 aa)) folds into the Era-type G domain. Positions 14–21 (GRPNVGKS) are G1. A GTP-binding site is contributed by 14–21 (GRPNVGKS). The G2 stretch occupies residues 40 to 44 (QTTRN). The G3 stretch occupies residues 61–64 (DTPG). GTP-binding positions include 61 to 65 (DTPGI) and 123 to 126 (NKID). A G4 region spans residues 123–126 (NKID). Residues 152 to 154 (ISA) are G5. Residues 204 to 282 (TREEVPHSVA…FLEIWVKVQK (79 aa)) form the KH type-2 domain.

The protein belongs to the TRAFAC class TrmE-Era-EngA-EngB-Septin-like GTPase superfamily. Era GTPase family. In terms of assembly, monomer.

The protein localises to the cytoplasm. Its subcellular location is the cell membrane. In terms of biological role, an essential GTPase that binds both GDP and GTP, with rapid nucleotide exchange. Plays a role in 16S rRNA processing and 30S ribosomal subunit biogenesis and possibly also in cell cycle regulation and energy metabolism. The protein is GTPase Era of Listeria monocytogenes serotype 4b (strain F2365).